The following is a 435-amino-acid chain: Membrane-bound ghrelin O-acyltransferase MBOAT4 (435 aa).

At 1–5 (MDWLQ) the chain is on the lumenal side. Residues 6-26 (FFFLHPVSLYQGAAFPFALLF) traverse the membrane as a helical segment. Over 27–40 (NYLCITESFPTRAR) the chain is Cytoplasmic. A helical transmembrane segment spans residues 41-56 (YLFLLAGGGVLALAAM). Topologically, residues 57–59 (GPY) are lumenal. A helical transmembrane segment spans residues 60–76 (ALLIFIPALCAVAMISS). Residues 77 to 82 (LSPQEV) lie on the Cytoplasmic side of the membrane. A helical membrane pass occupies residues 83 to 101 (HGLTFFFQMGWQTLCHLGL). The Lumenal portion of the chain corresponds to 102-120 (HYKEYYLCEPPPVRFYITL). The helical transmembrane segment at 121–136 (SSLMLLTQRVTSLSLD) threads the bilayer. At 137–206 (ISEGKVEAAW…YPSISFWALT (70 aa)) the chain is on the cytoplasmic side. The chain crosses the membrane as a helical span at residues 207–227 (WRGLQILGLECLKVALRRVVS). At 228–240 (AGAGLDDCQRLEC) the chain is on the lumenal side. A helical transmembrane segment spans residues 241–261 (IYIMWSTAGLFKLTYYSHWIL). Residues 262-324 (DDSLLHAAGF…KRLVFQRSRR (63 aa)) are Cytoplasmic-facing. Residues Asn307 and His338 contribute to the active site. The chain crosses the membrane as a helical span at residues 325-338 (WPVLQTFAFSAWWH). Residues 339 to 340 (GL) are Lumenal-facing. The chain crosses the membrane as a helical span at residues 341–357 (HPGQVFGFLCWSVMVKA). The Cytoplasmic segment spans residues 358–376 (DYLIHTFANGCIRSWPLRL). A helical membrane pass occupies residues 377–397 (LYRSLTWAHTQIIIAYVMLAV). The Lumenal segment spans residues 398–407 (EGRSFSSLCR). A helical transmembrane segment spans residues 408 to 428 (LCCSYNSIFPVTYCLLLFLLA). Topologically, residues 429-435 (RRKHKCN) are cytoplasmic.

This sequence belongs to the membrane-bound acyltransferase family. Monomer. Post-translationally, not glycosylated.

It is found in the endoplasmic reticulum membrane. The enzyme catalyses octanoyl-CoA + L-seryl-[protein] = O-octanoyl-L-seryl-[protein] + CoA. It carries out the reaction decanoyl-CoA + L-seryl-[protein] = O-decanoyl-L-seryl-[protein] + CoA. It catalyses the reaction L-seryl-[protein] + acetyl-CoA = O-acetyl-L-seryl-[protein] + CoA. The catalysed reaction is L-seryl-[protein] + butanoyl-CoA = O-butanoyl-L-seryl-[protein] + CoA. The enzyme catalyses pentanoyl-CoA + L-seryl-[protein] = O-pentanoyl-L-seryl-[protein] + CoA. It carries out the reaction hexanoyl-CoA + L-seryl-[protein] = O-hexanoyl-L-seryl-[protein] + CoA. It catalyses the reaction heptanoyl-CoA + L-seryl-[protein] = O-heptanoyl-L-seryl-[protein] + CoA. The catalysed reaction is nonanoyl-CoA + L-seryl-[protein] = O-nonanoyl-L-seryl-[protein] + CoA. The enzyme catalyses L-seryl-[protein] + dodecanoyl-CoA = O-dodecanoyl-L-seryl-[protein] + CoA. It carries out the reaction L-seryl-[protein] + tetradecanoyl-CoA = O-tetradecanoyl-L-seryl-[protein] + CoA. It catalyses the reaction a fatty acyl-CoA + L-seryl-[protein] = O-fatty acyl-L-seryl-[protein] + CoA. Its function is as follows. Catalyzes ghrelin acylation at 'Ser-3' using preferentially octanoyl-CoA, hexanoyl-CoA and decanoyl-CoA as acyl-CoA donors leading to ghrelin activity. In vitro uses also acyl-CoA donors of different lengths from short-chain (C2) to long-chain fatty acids (C16) knowing that acyl-CoA donors from butanoyl-CoA (C4) to dodecanoyl-CoA (C12) are more efficient compared to longer acyl-CoA donors, such as myristoyl-CoA (C14) and palmitoyl-CoA (C16) that are not efficient. The protein is Membrane-bound ghrelin O-acyltransferase MBOAT4 of Rattus norvegicus (Rat).